Here is a 278-residue protein sequence, read N- to C-terminus: Orotidine 5'-phosphate decarboxylase (278 aa).

Residues D40, 62-64, 93-102, Y229, and R247 each bind substrate; these read KTH and DRKFIDIGNT. Catalysis depends on K95, which acts as the Proton donor.

This sequence belongs to the OMP decarboxylase family.

The enzyme catalyses orotidine 5'-phosphate + H(+) = UMP + CO2. It functions in the pathway pyrimidine metabolism; UMP biosynthesis via de novo pathway; UMP from orotate: step 2/2. The protein is Orotidine 5'-phosphate decarboxylase (pyrG) of Aspergillus fumigatus (strain ATCC MYA-4609 / CBS 101355 / FGSC A1100 / Af293) (Neosartorya fumigata).